The chain runs to 261 residues: Segregation and condensation protein A (261 aa).

Belongs to the ScpA family. Component of a cohesin-like complex composed of ScpA, ScpB and the Smc homodimer, in which ScpA and ScpB bind to the head domain of Smc. The presence of the three proteins is required for the association of the complex with DNA.

Its subcellular location is the cytoplasm. In terms of biological role, participates in chromosomal partition during cell division. May act via the formation of a condensin-like complex containing Smc and ScpB that pull DNA away from mid-cell into both cell halves. The chain is Segregation and condensation protein A from Leptospira interrogans serogroup Icterohaemorrhagiae serovar copenhageni (strain Fiocruz L1-130).